The primary structure comprises 217 residues: Adenylate kinase (217 aa).

An ATP-binding site is contributed by 10–15 (GSGKGT). An NMP region spans residues 30-59 (STGDLLRAAVAAGSELGKQAKAAMDAGELV). AMP contacts are provided by residues Thr-31, Arg-36, 57–59 (ELV), 85–88 (GFPR), and Gln-92. The segment at 126–164 (GRRTCQACGAIYNIYFSPPEVDHRCDKCNSDQLVQRSDD) is LID. ATP is bound at residue Arg-127. Zn(2+) contacts are provided by Cys-130 and Cys-133. ATP is bound at residue 136 to 137 (IY). Positions 150 and 153 each coordinate Zn(2+). Arg-161 and Arg-172 together coordinate AMP. Asp-200 lines the ATP pocket.

Belongs to the adenylate kinase family. As to quaternary structure, monomer.

The protein localises to the cytoplasm. The enzyme catalyses AMP + ATP = 2 ADP. It functions in the pathway purine metabolism; AMP biosynthesis via salvage pathway; AMP from ADP: step 1/1. Functionally, catalyzes the reversible transfer of the terminal phosphate group between ATP and AMP. Plays an important role in cellular energy homeostasis and in adenine nucleotide metabolism. This chain is Adenylate kinase, found in Nitrosococcus oceani (strain ATCC 19707 / BCRC 17464 / JCM 30415 / NCIMB 11848 / C-107).